Reading from the N-terminus, the 178-residue chain is ATP-dependent protease subunit HslV (178 aa).

The active site involves Thr-8. Na(+) contacts are provided by Gly-163, Cys-166, and Thr-169.

Belongs to the peptidase T1B family. HslV subfamily. A double ring-shaped homohexamer of HslV is capped on each side by a ring-shaped HslU homohexamer. The assembly of the HslU/HslV complex is dependent on binding of ATP.

The protein resides in the cytoplasm. It carries out the reaction ATP-dependent cleavage of peptide bonds with broad specificity.. With respect to regulation, allosterically activated by HslU binding. Protease subunit of a proteasome-like degradation complex believed to be a general protein degrading machinery. This Treponema denticola (strain ATCC 35405 / DSM 14222 / CIP 103919 / JCM 8153 / KCTC 15104) protein is ATP-dependent protease subunit HslV.